The sequence spans 130 residues: MARPTKKTGPKKQKKNIPTGVAHIQSTFNNTIVTIADTKGDVISWASAGSSGFKGAKKGTPFAAQTAADNAARRAIEQGMRQLEVMVSGPGAGRETAIRALQGAGLEITLIRDVTPIPHNGCRPPKRRRV.

This sequence belongs to the universal ribosomal protein uS11 family. Part of the 30S ribosomal subunit. Interacts with proteins S7 and S18. Binds to IF-3.

Its function is as follows. Located on the platform of the 30S subunit, it bridges several disparate RNA helices of the 16S rRNA. Forms part of the Shine-Dalgarno cleft in the 70S ribosome. In Microcystis aeruginosa (strain NIES-843 / IAM M-2473), this protein is Small ribosomal subunit protein uS11.